The following is a 581-amino-acid chain: Prolactin receptor (581 aa).

Positions 1-24 (MKENAASRVLFILLLFLFASLLNG) are cleaved as a signal peptide. At 25–237 (QSPPEKPKLI…NDFPVKDTSM (213 aa)) the chain is on the extracellular side. Fibronectin type-III domains follow at residues 27–127 (PPEK…IVEP) and 129–229 (PPVN…IPND). Cysteines 36 and 46 form a disulfide. N59 carries an N-linked (GlcNAc...) asparagine glycan. C75 and C86 form a disulfide bridge. A glycan (N-linked (GlcNAc...) asparagine) is linked at N132. The Zn(2+) site is built by D211 and H212. A WSXWS motif motif is present at residues 215 to 219 (WSEWS). A helical transmembrane segment spans residues 238 to 258 (WIFVGVLSAVICLIMVWAVAL). The Cytoplasmic segment spans residues 259–581 (KGYSMVTCIL…SAKKAPPALP (323 aa)). The Box 1 motif motif lies at 267-275 (ILPPVPGPK). Composition is skewed to basic and acidic residues over residues 323–349 (QHLM…DTDS) and 375–388 (HIPE…DPET). 2 disordered regions span residues 323–388 (QHLM…DPET) and 462–492 (FKPS…PDQD).

The protein belongs to the type I cytokine receptor family. Type 1 subfamily. As to quaternary structure, interacts with SMARCA1. Interacts with NEK3 and VAV2 and this interaction is prolactin-dependent. Expressed in all tissues examined; liver, pituitary, adrenal gland, ovary and fetal liver.

It is found in the membrane. This is a receptor for the anterior pituitary hormone prolactin. The protein is Prolactin receptor (PRLR) of Ovis aries (Sheep).